Consider the following 268-residue polypeptide: MICOS complex subunit MIC27 (268 aa).

The transit peptide at 1 to 27 (MAAIRMGKLTTMPAGLIYASVSVHAAK) directs the protein to the mitochondrion. Residues 28-110 (QEESKKQLVK…YVYLKNPPRD (83 aa)) are Mitochondrial intermembrane-facing. Residues 111–129 (FLPKMGVITVSGLAGLVSA) form a helical membrane-spanning segment. The Mitochondrial matrix segment spans residues 130–137 (RKGSKFKK). A helical membrane pass occupies residues 138 to 155 (ITYPLGLATLGATVCYPV). Topologically, residues 156–268 (QSVIIAKVTA…EDIDMYSTRS (113 aa)) are mitochondrial intermembrane. The span at 187–200 (SKEESLPKPKEKTK) shows a compositional bias: basic and acidic residues. The disordered stretch occupies residues 187 to 268 (SKEESLPKPK…EDIDMYSTRS (82 aa)). At Ser-204 the chain carries Phosphoserine. The span at 249 to 260 (KLMDHGQSHPED) shows a compositional bias: basic and acidic residues.

The protein belongs to the apolipoprotein O/MICOS complex subunit Mic27 family. Component of the mitochondrial contact site and cristae organizing system (MICOS) complex, composed of at least MICOS10/MIC10, CHCHD3/MIC19, CHCHD6/MIC25, APOOL/MIC27, IMMT/MIC60, APOO/MIC23/MIC26 and MICOS13/MIC13. This complex was also known under the names MINOS or MitOS complex. The MICOS complex associates with mitochondrial outer membrane proteins SAMM50, MTX1 and MTX2 (together described as components of the mitochondrial outer membrane sorting assembly machinery (SAM) complex) and DNAJC11, mitochondrial inner membrane protein TMEM11 and with HSPA9. The MICOS and SAM complexes together with DNAJC11 are part of a large protein complex spanning both membranes termed the mitochondrial intermembrane space bridging (MIB) complex. Interacts with MICOS10/MIC10, IMMT/MIC60 and APOO/MIC23/MIC26.

The protein localises to the mitochondrion inner membrane. It is found in the mitochondrion. Functionally, component of the MICOS complex, a large protein complex of the mitochondrial inner membrane that plays crucial roles in the maintenance of crista junctions, inner membrane architecture, and formation of contact sites to the outer membrane. Specifically binds to cardiolipin (in vitro) but not to the precursor lipid phosphatidylglycerol. Plays a crucial role in crista junction formation and mitochondrial function,. This Homo sapiens (Human) protein is MICOS complex subunit MIC27 (APOOL).